The chain runs to 520 residues: Cytochrome P450 72A397 (520 aa).

Residues 14 to 34 (AVAVAVVVVGWAWKVLNWVWV) traverse the membrane as a helical segment. Position 468 (cysteine 468) interacts with heme.

This sequence belongs to the cytochrome P450 family. Heme is required as a cofactor.

The protein localises to the membrane. The enzyme catalyses oleanolate + reduced [NADPH--hemoprotein reductase] + O2 = hederagenin + oxidized [NADPH--hemoprotein reductase] + H2O + H(+). Functionally, catalyzes the oxidation of oleanolate at the C-23 position to form hederagenin. In Kalopanax septemlobus (Castor aralia), this protein is Cytochrome P450 72A397.